Consider the following 142-residue polypeptide: Large ribosomal subunit protein uL13 (142 aa).

It belongs to the universal ribosomal protein uL13 family. As to quaternary structure, part of the 50S ribosomal subunit.

This protein is one of the early assembly proteins of the 50S ribosomal subunit, although it is not seen to bind rRNA by itself. It is important during the early stages of 50S assembly. This is Large ribosomal subunit protein uL13 from Dictyoglomus thermophilum (strain ATCC 35947 / DSM 3960 / H-6-12).